Consider the following 104-residue polypeptide: Enhancer of rudimentary homolog 1 (104 aa).

It belongs to the E(R) family. In terms of assembly, homodimer. Component of the erh1-mmi1 complex. Interacts with mmi1 (via N-terminus) in a 2:2 stoichiometry.

The protein resides in the nucleus. It localises to the cytoplasm. Its function is as follows. Forms part of the erh1-mmi1 complex that recruits the CCR4-NOT complex and the NURS complex to target RNAs. Suppresses the meiotic program during vegetative growth and promotes the meiotic program during mating. Recruitment of the NURS complex to target mRNAs promotes mRNA decay by engagement of the nuclear exosome, and formation of heterochromatin islands at meiotic genes silenced by the exosome. Recruitment of the CCR4-NOT complex to target RNAs promotes heterochromatin formation at RNAi-dependent heterochromatin domains (HOODs), including a subset of meiotic genes, lncRNAs and retrotransposons. Recruitment of the CCR4-NOT complex to rDNA promotes rDNA heterochromatin assembly. In Schizosaccharomyces pombe (strain 972 / ATCC 24843) (Fission yeast), this protein is Enhancer of rudimentary homolog 1.